The primary structure comprises 567 residues: Urease subunit alpha (567 aa).

Residues 129–567 form the Urease domain; that stretch reads GGIDAHIHFI…LPLTQRYCLF (439 aa). His134, His136, and Lys217 together coordinate Ni(2+). The residue at position 217 (Lys217) is an N6-carboxylysine. His219 contributes to the substrate binding site. The Ni(2+) site is built by His246 and His272. The active-site Proton donor is the His320. Asp360 serves as a coordination point for Ni(2+).

This sequence belongs to the metallo-dependent hydrolases superfamily. Urease alpha subunit family. As to quaternary structure, heterotrimer of UreA (gamma), UreB (beta) and UreC (alpha) subunits. Three heterotrimers associate to form the active enzyme. Ni cation is required as a cofactor. In terms of processing, carboxylation allows a single lysine to coordinate two nickel ions.

It is found in the cytoplasm. The catalysed reaction is urea + 2 H2O + H(+) = hydrogencarbonate + 2 NH4(+). It participates in nitrogen metabolism; urea degradation; CO(2) and NH(3) from urea (urease route): step 1/1. This chain is Urease subunit alpha, found in Psychromonas ingrahamii (strain DSM 17664 / CCUG 51855 / 37).